The sequence spans 70 residues: MTTILLKENEPFEVAIRRFRRAIEKNGLIAELRERQSYEKPTTARKRKKAAAVKRLHKRLRSQMLPKKLH.

The protein belongs to the bacterial ribosomal protein bS21 family.

The chain is Small ribosomal subunit protein bS21A from Paraburkholderia xenovorans (strain LB400).